The chain runs to 494 residues: Glutamate--tRNA ligase (494 aa).

The 'HIGH' region signature appears at 15–25 (PSPTGNPHVGL). Cys-112, Cys-114, Cys-139, and Glu-141 together coordinate Zn(2+). A 'KMSKS' region motif is present at residues 260–264 (KLSKR). Lys-263 serves as a coordination point for ATP.

It belongs to the class-I aminoacyl-tRNA synthetase family. Glutamate--tRNA ligase type 1 subfamily. As to quaternary structure, monomer. Zn(2+) serves as cofactor.

It is found in the cytoplasm. The catalysed reaction is tRNA(Glu) + L-glutamate + ATP = L-glutamyl-tRNA(Glu) + AMP + diphosphate. Functionally, catalyzes the attachment of glutamate to tRNA(Glu) in a two-step reaction: glutamate is first activated by ATP to form Glu-AMP and then transferred to the acceptor end of tRNA(Glu). This is Glutamate--tRNA ligase from Streptomyces coelicolor (strain ATCC BAA-471 / A3(2) / M145).